Here is a 386-residue protein sequence, read N- to C-terminus: GTPase Obg (386 aa).

The 159-residue stretch at 1-159 (MKFVDEAKIK…RNLLLELLLL (159 aa)) folds into the Obg domain. In terms of domain architecture, OBG-type G spans 160–333 (ADVGMLGLPN…LCRDVVEYLE (174 aa)). GTP-binding positions include 166–173 (GLPNAGKS), 191–195 (FTTLV), 213–216 (DIPG), 283–286 (NKTD), and 314–316 (AAI). Residues Ser173 and Thr193 each coordinate Mg(2+).

It belongs to the TRAFAC class OBG-HflX-like GTPase superfamily. OBG GTPase family. As to quaternary structure, monomer. It depends on Mg(2+) as a cofactor.

Its subcellular location is the cytoplasm. Its function is as follows. An essential GTPase which binds GTP, GDP and possibly (p)ppGpp with moderate affinity, with high nucleotide exchange rates and a fairly low GTP hydrolysis rate. Plays a role in control of the cell cycle, stress response, ribosome biogenesis and in those bacteria that undergo differentiation, in morphogenesis control. The protein is GTPase Obg of Psychromonas ingrahamii (strain DSM 17664 / CCUG 51855 / 37).